We begin with the raw amino-acid sequence, 177 residues long: Large ribosomal subunit protein uL6 (177 aa).

It belongs to the universal ribosomal protein uL6 family. In terms of assembly, part of the 50S ribosomal subunit.

Its function is as follows. This protein binds to the 23S rRNA, and is important in its secondary structure. It is located near the subunit interface in the base of the L7/L12 stalk, and near the tRNA binding site of the peptidyltransferase center. This Pseudomonas syringae pv. syringae (strain B728a) protein is Large ribosomal subunit protein uL6.